Consider the following 707-residue polypeptide: MARKTSIERYRNIGICAHVDAGKTTTTERVLFYTGLSHKIGEVHDGAATMDWMEQEQERGITITSAATTCFWQGMDKQFPEHRVNIIDTPGHVDFTIEVERSLRVLDGAVVVLCASSGVQPQTETVWRQANKYEVPRMVFVNKMDRAGADFLSVVHQMKTRLAAQAVPMQLPVGAEDNFRGVVDLVKMKFINWSEEDMGTSFTYEDIPADMVDECEKYHGELVEAAAEANEELMNKYLEEGELTEAEIKQGLRIRTLANDICLVACGSAFKNKGVQAVLDAVIEYLPSPTEVKPITGILDDESEGVRKSSDEEPFSALAFKIATDPFVGTLTFVRVYSGVLNQGDGVVNPVKNKKERVGRMVQMHSNSREEIKEVRAGDIAALIGLKDVTTGDTLCDPAHKITLERMEFPEPVISVAVEPKTKADQEKMGIALGKLAAEDPSFRVKTDEESGQTIISGMGELHLDIIVDRMKREFKVECNVGQPQVAYREAIRDAVEIEGKFVRQSGGRGQFGHVWLKLEPMTIEEDANGDDITYKFVNEIVGGVVPKEYIPAVDKGIQEQMQQGVLAGYPVLGVKATLYDGSYHDVDSSEMAFKIAGSMAFKKGALKANPALLEPMMKVEVITPEESMGDVVGDLNRRRGLIEGMEEAPGGLKAVNAQVPLSEMFGYATDLRSQTQGRASYSMEFLKYAEAPNNIAEKVMAERNAK.

The region spanning glutamate 8–threonine 290 is the tr-type G domain. GTP is bound by residues alanine 17–threonine 24, aspartate 88–histidine 92, and asparagine 142–aspartate 145.

The protein belongs to the TRAFAC class translation factor GTPase superfamily. Classic translation factor GTPase family. EF-G/EF-2 subfamily.

Its subcellular location is the cytoplasm. In terms of biological role, catalyzes the GTP-dependent ribosomal translocation step during translation elongation. During this step, the ribosome changes from the pre-translocational (PRE) to the post-translocational (POST) state as the newly formed A-site-bound peptidyl-tRNA and P-site-bound deacylated tRNA move to the P and E sites, respectively. Catalyzes the coordinated movement of the two tRNA molecules, the mRNA and conformational changes in the ribosome. In Idiomarina loihiensis (strain ATCC BAA-735 / DSM 15497 / L2-TR), this protein is Elongation factor G.